The following is a 272-amino-acid chain: MTEKQLSCCLDLMRRLPPSQIEDNLAGLLDLVPDLTEDLLSSIDQPLKVAYDAVSKKDYLLCDYNRDADSYRSPWSNKYDPPLSGACYPSSKLRDIEVQANEIFEIYLNLYFEGGVSSVYCWDLDDNFAAVVLMKKTQDQSKKGQPMRGTWDSIHVVEVKLGKKDKAVYKLTSTVMLSIETDNDNTGKVNLAGSLTRQDEKEYTFNEVDTHCVNIGKMVEDMESKLRQTLETIYFGKTKEVVNTLRNATGNSELEKRKNLSNQIGSAIGNRG.

It belongs to the F-actin-capping protein beta subunit family. In terms of assembly, component of the F-actin capping complex, composed of a heterodimer of an alpha and a beta subunit.

It is found in the cytoplasm. It localises to the cytoskeleton. F-actin-capping proteins bind in a Ca(2+)-independent manner to the fast growing ends of actin filaments (barbed end) thereby blocking the exchange of subunits at these ends. Unlike other capping proteins (such as gelsolin and severin), these proteins do not sever actin filaments. In Dictyostelium discoideum (Social amoeba), this protein is F-actin-capping protein subunit beta (acpA).